A 468-amino-acid chain; its full sequence is Dihydrolipoyl dehydrogenase (468 aa).

Residues 39–47, Lys-56, and Ala-119 contribute to the FAD site; that span reads EKGNLGGVC. Residues Cys-47 and Cys-52 are joined by a disulfide bond. Residues 183–187, Glu-206, and 271–274 each bind NAD(+); these read GGGYI and TVGR. Residues Asp-314 and Ala-322 each contribute to the FAD site. His-446 acts as the Proton acceptor in catalysis.

The protein belongs to the class-I pyridine nucleotide-disulfide oxidoreductase family. Homodimer. FAD serves as cofactor.

Its subcellular location is the cytoplasm. The protein localises to the membrane. It carries out the reaction N(6)-[(R)-dihydrolipoyl]-L-lysyl-[protein] + NAD(+) = N(6)-[(R)-lipoyl]-L-lysyl-[protein] + NADH + H(+). Functionally, lipoamide dehydrogenase is a component of the alpha-ketoacid dehydrogenase complexes. The chain is Dihydrolipoyl dehydrogenase (pdhD) from Staphylococcus aureus (strain COL).